Consider the following 106-residue polypeptide: Small ribosomal subunit protein uS10 (106 aa).

Belongs to the universal ribosomal protein uS10 family. Part of the 30S ribosomal subunit.

In terms of biological role, involved in the binding of tRNA to the ribosomes. The sequence is that of Small ribosomal subunit protein uS10 from Prochlorococcus marinus (strain MIT 9312).